The sequence spans 152 residues: Deoxyuridine 5'-triphosphate nucleotidohydrolase (152 aa).

Residues 72–74, N85, and 89–91 each bind substrate; these read RSG and TID.

Belongs to the dUTPase family. It depends on Mg(2+) as a cofactor.

It catalyses the reaction dUTP + H2O = dUMP + diphosphate + H(+). It participates in pyrimidine metabolism; dUMP biosynthesis; dUMP from dCTP (dUTP route): step 2/2. Functionally, this enzyme is involved in nucleotide metabolism: it produces dUMP, the immediate precursor of thymidine nucleotides and it decreases the intracellular concentration of dUTP so that uracil cannot be incorporated into DNA. The chain is Deoxyuridine 5'-triphosphate nucleotidohydrolase from Rhodopseudomonas palustris (strain ATCC BAA-98 / CGA009).